A 191-amino-acid polypeptide reads, in one-letter code: uncharacterized protein (191 aa).

A signal peptide spans 1–17; that stretch reads MESIILSIAIFIGVLLG. A disordered region spans residues 82-148; it reads TFSGSRTSPD…DVGAGSGSSI (67 aa). Residues 168–188 traverse the membrane as a helical segment; that stretch reads VAVLITAAILSAPVTAIALLE.

The protein localises to the membrane. This is an uncharacterized protein from Saccharomyces cerevisiae (strain ATCC 204508 / S288c) (Baker's yeast).